Consider the following 1001-residue polypeptide: Transcription-repair-coupling factor (1001 aa).

Residues 499–658 enclose the Helicase ATP-binding domain; that stretch reads DLSSHRVMDR…LSQIKGISSL (160 aa). 512–519 contacts ATP; that stretch reads GDVGFGKT. The DEEH box motif lies at 611 to 614; the sequence is DEEH. The Helicase C-terminal domain occupies 679–835; sequence LLKEIIYREL…SIAYHDLEIR (157 aa).

This sequence in the N-terminal section; belongs to the UvrB family. In the C-terminal section; belongs to the helicase family. RecG subfamily.

Its subcellular location is the cytoplasm. Couples transcription and DNA repair by recognizing RNA polymerase (RNAP) stalled at DNA lesions. Mediates ATP-dependent release of RNAP and its truncated transcript from the DNA, and recruitment of nucleotide excision repair machinery to the damaged site. The sequence is that of Transcription-repair-coupling factor from Helicobacter pylori (strain J99 / ATCC 700824) (Campylobacter pylori J99).